We begin with the raw amino-acid sequence, 282 residues long: NAD(P)H-hydrate epimerase (282 aa).

The transit peptide at 1-53 (MSGLRTLLGLGLLVAGSRLPRVISQQSVCRARPIWWGTQRRGSETMAGAAVKY) directs the protein to the mitochondrion. A Phosphoserine; by PKA modification is found at serine 43. The YjeF N-terminal domain maps to 59–269 (AQAVDQELFN…ALEKKYQLNL (211 aa)). 113–117 (NNGGD) contributes to the (6S)-NADPHX binding site. Residue asparagine 114 participates in K(+) binding. At lysine 138 the chain carries N6-succinyllysine. Residue aspartate 179 coordinates K(+). Residues 183–189 (GFSFKGD) and aspartate 212 contribute to the (6S)-NADPHX site. Serine 215 serves as a coordination point for K(+).

This sequence belongs to the NnrE/AIBP family. Homodimer. Interacts with APOA1 and APOA2. The cofactor is K(+). Undergoes physiological phosphorylation during sperm capacitation, downstream to PKA activation. Detected in testis and sperm (at protein level). Expressed at high levels in heart, liver, kidney, and testis.

The protein resides in the mitochondrion. It is found in the secreted. It carries out the reaction (6R)-NADHX = (6S)-NADHX. The catalysed reaction is (6R)-NADPHX = (6S)-NADPHX. In terms of biological role, catalyzes the epimerization of the S- and R-forms of NAD(P)HX, a damaged form of NAD(P)H that is a result of enzymatic or heat-dependent hydration. This is a prerequisite for the S-specific NAD(P)H-hydrate dehydratase to allow the repair of both epimers of NAD(P)HX. Accelerates cholesterol efflux from endothelial cells to high-density lipoprotein (HDL) and thereby regulates angiogenesis. In Mus musculus (Mouse), this protein is NAD(P)H-hydrate epimerase.